The following is a 383-amino-acid chain: Succinyl-diaminopimelate desuccinylase (383 aa).

H73 serves as a coordination point for Zn(2+). D75 is a catalytic residue. Zn(2+) is bound at residue D107. The Proton acceptor role is filled by E141. Residues E142, E170, and H356 each contribute to the Zn(2+) site.

Belongs to the peptidase M20A family. DapE subfamily. In terms of assembly, homodimer. Zn(2+) serves as cofactor. Co(2+) is required as a cofactor.

The enzyme catalyses N-succinyl-(2S,6S)-2,6-diaminopimelate + H2O = (2S,6S)-2,6-diaminopimelate + succinate. The protein operates within amino-acid biosynthesis; L-lysine biosynthesis via DAP pathway; LL-2,6-diaminopimelate from (S)-tetrahydrodipicolinate (succinylase route): step 3/3. Functionally, catalyzes the hydrolysis of N-succinyl-L,L-diaminopimelic acid (SDAP), forming succinate and LL-2,6-diaminopimelate (DAP), an intermediate involved in the bacterial biosynthesis of lysine and meso-diaminopimelic acid, an essential component of bacterial cell walls. The polypeptide is Succinyl-diaminopimelate desuccinylase (Pseudomonas aeruginosa (strain UCBPP-PA14)).